Here is a 119-residue protein sequence, read N- to C-terminus: DNA-binding protein MmarC7_1157 (119 aa).

Basic and acidic residues predominate over residues 1-12; the sequence is MNPEEIRQRRLQ. The disordered stretch occupies residues 1-37; the sequence is MNPEEIRQRRLQEMQAKAQEQGAANDPEAQRQAQEQQ.

This sequence belongs to the PDCD5 family.

This is DNA-binding protein MmarC7_1157 from Methanococcus maripaludis (strain C7 / ATCC BAA-1331).